The sequence spans 282 residues: Farnesyl diphosphate synthase (282 aa).

Isopentenyl diphosphate-binding residues include K45, R48, and H77. Mg(2+)-binding residues include D84 and D90. R95 is a (2E)-geranyl diphosphate binding site. Isopentenyl diphosphate is bound at residue R96. (2E)-geranyl diphosphate contacts are provided by K181, T182, and Q220.

The protein belongs to the FPP/GGPP synthase family. Requires Mg(2+) as cofactor.

It is found in the cytoplasm. The enzyme catalyses isopentenyl diphosphate + (2E)-geranyl diphosphate = (2E,6E)-farnesyl diphosphate + diphosphate. This chain is Farnesyl diphosphate synthase (ispA), found in Buchnera aphidicola subsp. Acyrthosiphon pisum (strain APS) (Acyrthosiphon pisum symbiotic bacterium).